The sequence spans 364 residues: Caffeic acid 3-O-methyltransferase 2 (364 aa).

129 to 135 (MNQDKVL) lines the substrate pocket. Residues 161–179 (AFEYHGTDPRFNKVFNKGM) are substrate binding. S-adenosyl-L-methionine is bound by residues Gly207, Asp230, Asp250, Met251, and Lys264. The Proton acceptor role is filled by His268.

This sequence belongs to the class I-like SAM-binding methyltransferase superfamily. Cation-independent O-methyltransferase family. COMT subfamily. As to quaternary structure, homodimer.

It catalyses the reaction (E)-caffeate + S-adenosyl-L-methionine = (E)-ferulate + S-adenosyl-L-homocysteine + H(+). The protein operates within aromatic compound metabolism; phenylpropanoid biosynthesis. Functionally, catalyzes the conversion of caffeic acid to ferulic acid and of 5-hydroxyferulic acid to sinapic acid. The resulting products may subsequently be converted to the corresponding alcohols that are incorporated into lignins. This chain is Caffeic acid 3-O-methyltransferase 2 (OMT2), found in Populus tremuloides (Quaking aspen).